The primary structure comprises 334 residues: Ketol-acid reductoisomerase (NADP(+)) (334 aa).

A KARI N-terminal Rossmann domain is found at 1-181 (MNIYYDKNAD…GGGRTGILET (181 aa)). Residues 24-27 (YGSQ), Arg-47, Ser-50, Ser-52, and 82-85 (DEFQ) contribute to the NADP(+) site. His-107 is a catalytic residue. Gly-133 contacts NADP(+). Residues 182–323 (SFKDETETDL…ESLRSMMPWI (142 aa)) enclose the KARI C-terminal knotted domain. Residues Asp-190, Glu-194, Glu-226, and Glu-230 each coordinate Mg(2+). Substrate is bound at residue Ser-251.

Belongs to the ketol-acid reductoisomerase family. Requires Mg(2+) as cofactor.

The enzyme catalyses (2R)-2,3-dihydroxy-3-methylbutanoate + NADP(+) = (2S)-2-acetolactate + NADPH + H(+). The catalysed reaction is (2R,3R)-2,3-dihydroxy-3-methylpentanoate + NADP(+) = (S)-2-ethyl-2-hydroxy-3-oxobutanoate + NADPH + H(+). It participates in amino-acid biosynthesis; L-isoleucine biosynthesis; L-isoleucine from 2-oxobutanoate: step 2/4. The protein operates within amino-acid biosynthesis; L-valine biosynthesis; L-valine from pyruvate: step 2/4. In terms of biological role, involved in the biosynthesis of branched-chain amino acids (BCAA). Catalyzes an alkyl-migration followed by a ketol-acid reduction of (S)-2-acetolactate (S2AL) to yield (R)-2,3-dihydroxy-isovalerate. In the isomerase reaction, S2AL is rearranged via a Mg-dependent methyl migration to produce 3-hydroxy-3-methyl-2-ketobutyrate (HMKB). In the reductase reaction, this 2-ketoacid undergoes a metal-dependent reduction by NADPH to yield (R)-2,3-dihydroxy-isovalerate. The sequence is that of Ketol-acid reductoisomerase (NADP(+)) from Vesicomyosocius okutanii subsp. Calyptogena okutanii (strain HA).